The chain runs to 106 residues: Large ribosomal subunit protein eL36 (106 aa).

Positions 75–93 (VRQEKVGHSQESKEEERGD) are enriched in basic and acidic residues. The segment at 75–106 (VRQEKVGHSQESKEEERGDVQCSPPDEGWWWY) is disordered.

Belongs to the eukaryotic ribosomal protein eL36 family.

This chain is Large ribosomal subunit protein eL36 (RPL36), found in Daucus carota (Wild carrot).